A 423-amino-acid chain; its full sequence is Probable M18 family aminopeptidase 2 (423 aa).

Zn(2+)-binding residues include histidine 84, histidine 157, and histidine 397.

This sequence belongs to the peptidase M18 family. Requires Zn(2+) as cofactor.

The protein is Probable M18 family aminopeptidase 2 (apeB) of Borreliella burgdorferi (strain ATCC 35210 / DSM 4680 / CIP 102532 / B31) (Borrelia burgdorferi).